The primary structure comprises 227 residues: Orotidine 5'-phosphate decarboxylase (227 aa).

Substrate is bound by residues aspartate 8, lysine 30, 59-68, threonine 118, arginine 178, glutamine 187, glycine 207, and arginine 208; that span reads DLKLYDIPYT. Lysine 61 serves as the catalytic Proton donor.

This sequence belongs to the OMP decarboxylase family. Type 1 subfamily. As to quaternary structure, homodimer.

The catalysed reaction is orotidine 5'-phosphate + H(+) = UMP + CO2. It participates in pyrimidine metabolism; UMP biosynthesis via de novo pathway; UMP from orotate: step 2/2. Functionally, catalyzes the decarboxylation of orotidine 5'-monophosphate (OMP) to uridine 5'-monophosphate (UMP). This is Orotidine 5'-phosphate decarboxylase from Helicobacter pylori (strain ATCC 700392 / 26695) (Campylobacter pylori).